The chain runs to 473 residues: PEP-dependent dihydroxyacetone kinase, phosphoryl donor subunit DhaM (473 aa).

A PTS EIIA type-4 domain is found at 1–137 (MVNLVIVSHS…LAAKQAQLGI (137 aa)). The active-site Tele-phosphohistidine intermediate is the His-9. One can recognise an HPr domain in the interval 155 to 242 (ARSVTVTIRN…SLAAEDFGEH (88 aa)). His-169 functions as the Pros-phosphohistidine intermediate in the catalytic mechanism. The PTS EI-like, N-terminal part stretch occupies residues 266–472 (PLPLAQPARH…IDPAAQRVSC (207 aa)). His-432 serves as the catalytic Tele-phosphohistidine intermediate.

The protein belongs to the PEP-utilizing enzyme family. As to quaternary structure, homodimer. The dihydroxyacetone kinase complex is composed of a homodimer of DhaM, a homodimer of DhaK and the subunit DhaL.

The enzyme catalyses dihydroxyacetone + phosphoenolpyruvate = dihydroxyacetone phosphate + pyruvate. Functionally, component of the dihydroxyacetone kinase complex, which is responsible for the phosphoenolpyruvate (PEP)-dependent phosphorylation of dihydroxyacetone. DhaM serves as the phosphoryl donor. Is phosphorylated by phosphoenolpyruvate in an EI- and HPr-dependent reaction, and a phosphorelay system on histidine residues finally leads to phosphoryl transfer to DhaL and dihydroxyacetone. This chain is PEP-dependent dihydroxyacetone kinase, phosphoryl donor subunit DhaM, found in Pantoea ananatis (strain LMG 20103).